A 507-amino-acid polypeptide reads, in one-letter code: Cytochrome c-type protein ImcH (507 aa).

Helical transmembrane passes span 14–34 (ISLIGFLLAVVATGLIIAFIA), 45–65 (YIGLLVYFAFPGMLILGLILV), and 100–120 (LFIFFVLASVIFVLIVSVASI). Residues Cys132, Cys136, Met140, His152, Cys157, Cys160, His161, Asp400, Cys449, Cys452, His453, Cys487, Cys490, His491, and Glu496 each contribute to the heme site.

The protein belongs to the NapC/NirT/NrfH family. Binds 4 heme c groups covalently per subunit.

It localises to the cell inner membrane. In terms of biological role, redox protein involved in a high-potential metal respiratory pathway. Is required only for electron transfer to terminal extracellular electron acceptors with redox potentials higher than -0.1 V. ImcH likely transfers electrons from the quinone pool to a periplasmic acceptor. This chain is Cytochrome c-type protein ImcH, found in Geobacter sulfurreducens (strain ATCC 51573 / DSM 12127 / PCA).